The chain runs to 594 residues: Putative diflavin flavoprotein A 4 (594 aa).

Positions 57-250 (RRGTTSNSYL…LTLKMIAPGH (194 aa)) are zinc metallo-hydrolase. One can recognise a Flavodoxin-like domain in the interval 279 to 417 (VALIYASAYG…VCTTSGANFA (139 aa)). The segment at 445–594 (VGRIIGSIGV…IRHRKSGGQY (150 aa)) is flavodoxin-reductase-like.

In the N-terminal section; belongs to the zinc metallo-hydrolase group 3 family. It in the C-terminal section; belongs to the flavodoxin reductase family. Requires Fe cation as cofactor.

Its function is as follows. Mediates electron transfer from NADH to oxygen, reducing it to water. This modular protein has 3 redox cofactors, in other organisms the same activity requires 2 or 3 proteins. This Synechocystis sp. (strain ATCC 27184 / PCC 6803 / Kazusa) protein is Putative diflavin flavoprotein A 4 (dfa4).